The chain runs to 85 residues: Neurotoxin 60.35 (85 aa).

An N-terminal signal peptide occupies residues 1-23; sequence MKFCVAVSLLIIASMAGVISVSG. An LCN-type CS-alpha/beta domain is found at 24-85; it reads YDVYPRDYAG…NFLSVIWKQC (62 aa). 3 disulfide bridges follow: Cys38–Cys60, Cys46–Cys65, and Cys50–Cys67.

It belongs to the long (3 C-C) scorpion toxin superfamily. As to expression, expressed by the venom gland.

It localises to the secreted. The sequence is that of Neurotoxin 60.35 from Lychas mucronatus (Chinese swimming scorpion).